Here is a 328-residue protein sequence, read N- to C-terminus: Formyltetrahydrofolate deformylase 2, mitochondrial (328 aa).

The transit peptide at 1 to 12 (MIRRVSTTSCLS) directs the protein to the mitochondrion. An ACT domain is found at 46 to 129 (FHVFHCPDVV…SVVRVPSLDP (84 aa)). Asp272 is an active-site residue.

The protein belongs to the PurU family. As to expression, expressed in leaves, cotyledons, roots, seeds and flowers.

It localises to the mitochondrion. The catalysed reaction is (6R)-10-formyltetrahydrofolate + H2O = (6S)-5,6,7,8-tetrahydrofolate + formate + H(+). Its function is as follows. Deformylase involved in photorespiration. Prevents excessive accumulation of 5-formyl tetrahydrofolate (THF), a potent inhibitor of the Gly decarboxylase/Ser hydroxymethyltransferase complex. The chain is Formyltetrahydrofolate deformylase 2, mitochondrial (PURU2) from Arabidopsis thaliana (Mouse-ear cress).